Here is a 621-residue protein sequence, read N- to C-terminus: SH2B adapter protein 2 (621 aa).

Y47 is subject to Phosphotyrosine. S130 bears the Phosphoserine mark. The interval 144–165 (RASPEPEGGATPKTTEPVSEPR) is disordered. In terms of domain architecture, PH spans 186–299 (DIQREGALRF…WVADIQGCVD (114 aa)). A Phosphoserine modification is found at S303. The SH2 domain occupies 409–507 (WFHGTLSRVK…SADITLRSYV (99 aa)). Disordered regions lie at residues 507–528 (VRAQ…PVPA) and 548–609 (PPTS…ATLG). Low complexity predominate over residues 552 to 570 (PSNGAGASSSSGSSSSATS). At S597 the chain carries Phosphoserine. Residue Y618 is modified to Phosphotyrosine.

This sequence belongs to the SH2B adapter family. In terms of assembly, homodimer. Interacts with KIT/c-KIT, SHC1, EPOR, PDGFR, VAV1 and VAV3. Interacts (via N-terminal region) with SHC1. Interacts (via the phosphorylated C-terminus) with GRB2. Interacts (via its SH2 domain) with EPOR, INSR and KIT. Interacts with GRB2 after B-cell antigen receptor stimulation. Interacts (via PH domain) with VAV3. Interacts with NTRK1, NTRK2 and NTRK3 (phosphorylated); after stimulation of the receptor by its extracellular ligand and subsequent autophosphorylation of the receptor. Binds INSR, GRB2, ASB6 and CAP. Insulin stimulation leads to dissociation of CAP. Binds CBS only when SH2B2/APS has become phosphorylated. INSR binding does not depend on the phosphorylation of SH2B2/APS. Phosphorylated on a tyrosine residue by NTRK1, NTRK2, NTRK3 and INSR after stimulation of the receptor by its extracellular ligand. Tyrosine phosphorylated by JAK2, KIT and other kinases activated by B-cell receptor in response to stimulation with cytokines, IL3, IL5, PDGF, IGF1, IGF2, CSF2/GM-CSF and cross-linking of the B-cell receptor complex. Detected in embryonic brain, spinal cord and cortical neurons.

The protein localises to the cytoplasm. It localises to the membrane. Functionally, adapter protein for several members of the tyrosine kinase receptor family. Involved in multiple signaling pathways. Binds to EPOR and suppresses EPO-induced STAT5 activation, possibly through a masking effect on STAT5 docking sites in EPOR. Suppresses PDGF-induced mitogenesis. Involved in stimulation of glucose uptake by insulin. Involved in coupling from immunoreceptor to Ras signaling. Acts as a negative regulator of cytokine signaling in collaboration with CBL. Induces cytoskeletal reorganization and neurite outgrowth in cultured neurons. The protein is SH2B adapter protein 2 (Sh2b2) of Rattus norvegicus (Rat).